We begin with the raw amino-acid sequence, 467 residues long: Putative gluconeogenesis factor (467 aa).

Pro residues predominate over residues 1 to 12; that stretch reads MSAPPAPPPDRS. The disordered stretch occupies residues 1 to 27; that stretch reads MSAPPAPPPDRSAPPDRTDSAQTEPTR.

Belongs to the gluconeogenesis factor family.

Its subcellular location is the cytoplasm. Functionally, required for morphogenesis under gluconeogenic growth conditions. This is Putative gluconeogenesis factor from Deinococcus radiodurans (strain ATCC 13939 / DSM 20539 / JCM 16871 / CCUG 27074 / LMG 4051 / NBRC 15346 / NCIMB 9279 / VKM B-1422 / R1).